Consider the following 34-residue polypeptide: Photosystem II reaction center protein M (34 aa).

The chain crosses the membrane as a helical span at residues 7–27 (GFVASLMFILVPAIFLIVLYI).

The protein belongs to the PsbM family. In terms of assembly, PSII is composed of 1 copy each of membrane proteins PsbA, PsbB, PsbC, PsbD, PsbE, PsbF, PsbH, PsbI, PsbJ, PsbK, PsbL, PsbM, PsbT, PsbX, PsbY, PsbZ, Psb30/Ycf12, peripheral proteins PsbO, CyanoQ (PsbQ), PsbU, PsbV and a large number of cofactors. It forms dimeric complexes.

Its subcellular location is the cellular thylakoid membrane. In terms of biological role, one of the components of the core complex of photosystem II (PSII). PSII is a light-driven water:plastoquinone oxidoreductase that uses light energy to abstract electrons from H(2)O, generating O(2) and a proton gradient subsequently used for ATP formation. It consists of a core antenna complex that captures photons, and an electron transfer chain that converts photonic excitation into a charge separation. This subunit is found at the monomer-monomer interface. This chain is Photosystem II reaction center protein M, found in Synechococcus sp. (strain CC9605).